The chain runs to 76 residues: Protein OPG128 (76 aa).

Cysteines 17 and 21 form a disulfide.

It belongs to the orthopoxvirus OPG128 family. Interacts with sulfhydryl oxidase OPG072; this interaction involves formation of a transient disulfide-bonded intermediate, allowing disulfide bond transfer. Interacts with OPG088; this interaction involves formation of a transient disulfide-bonded intermediate, allowing disulfide bond transfer.

Functionally, late protein which probably participates in disulfide bond formation by functioning as a thiol-disulfide transfer protein between membrane-associated OPG072 and OPG08. The complete pathway for formation of disulfide bonds in intracellular virion membrane proteins sequentially involves oxidation of OPG072, OPG128 and OPG08. This is Protein OPG128 (OPG128) from Variola virus (isolate Human/India/Ind3/1967) (VARV).